The following is an 810-amino-acid chain: Venom phosphodiesterase 2 (810 aa).

Residues 1–23 (MIQQKVLFISLVAVTLGLGLGLG) form the signal peptide. Positions 33–77 (QSWSCSKLRCGEKRIANVLCSCSDDCLEKKDCCTDYKSICKGETS) constitute an SMB domain. 9 disulfides stabilise this stretch: cysteine 37-cysteine 42, cysteine 37-cysteine 54, cysteine 42-cysteine 72, cysteine 52-cysteine 54, cysteine 52-cysteine 65, cysteine 58-cysteine 64, cysteine 65-cysteine 72, cysteine 83-cysteine 129, and cysteine 91-cysteine 303. The a divalent metal cation site is built by aspartate 106 and threonine 144. Catalysis depends on threonine 144, which acts as the AMP-threonine intermediate. N-linked (GlcNAc...) asparagine glycosylation is found at asparagine 175, asparagine 218, and asparagine 229. Residue lysine 230 coordinates AMP. The a divalent metal cation site is built by aspartate 264, histidine 268, aspartate 311, and histidine 312. Histidine 268 contacts AMP. Intrachain disulfides connect cysteine 319/cysteine 416, cysteine 367/cysteine 752, cysteine 500/cysteine 558, cysteine 513/cysteine 613, cysteine 515/cysteine 598, and cysteine 721/cysteine 731. N-linked (GlcNAc...) asparagine glycosylation is present at asparagine 364. Histidine 421 provides a ligand contact to a divalent metal cation. Asparagine 471, asparagine 553, asparagine 633, and asparagine 704 each carry an N-linked (GlcNAc...) asparagine glycan.

It belongs to the nucleotide pyrophosphatase/phosphodiesterase family. In terms of assembly, monomer cleaved in two subunits; disulfide-linked. Is synthesized as a single-chain protein and is subsequently cleaved to form a two-subunit protein held together with disulfide bonds. A divalent metal cation serves as cofactor. As to expression, expressed by venom gland.

Its subcellular location is the secreted. It carries out the reaction ADP + H2O = AMP + phosphate + H(+). Its function is as follows. Hydrolyzes ADP with high activity. Shows weak or no activity on 5'-AMP, 5'-GMP, 3'-AMP, ATP, cAMP, and cGMP. Is devoid of monophosphatase and proteinase activities. Dose-dependently inhibits platelet aggregation induced by ADP (IC(50)=0.99 uM) and collagen (IC(50)=1.4 uM). The chain is Venom phosphodiesterase 2 from Crotalus adamanteus (Eastern diamondback rattlesnake).